The sequence spans 398 residues: cAMP-dependent protein kinase type 3 (398 aa).

A phosphoserine mark is found at Ser15 and Ser55. The Protein kinase domain maps to 88–342; sequence FQILRTLGTG…SEDVKNHPWF (255 aa). ATP-binding positions include 94–102 and Lys117; that span reads LGTGSFGRV. Asp211 serves as the catalytic Proton acceptor. Residues 343-398 form the AGC-kinase C-terminal domain; the sequence is NEVIWEKLLARYIETPYEPPIQQGQGDTSQFDRYPEEEFNYGIQGEDPYMDLMKEF.

This sequence belongs to the protein kinase superfamily. AGC Ser/Thr protein kinase family. cAMP subfamily.

The enzyme catalyses L-seryl-[protein] + ATP = O-phospho-L-seryl-[protein] + ADP + H(+). It carries out the reaction L-threonyl-[protein] + ATP = O-phospho-L-threonyl-[protein] + ADP + H(+). Its activity is regulated as follows. Activated by cAMP. In Saccharomyces cerevisiae (strain ATCC 204508 / S288c) (Baker's yeast), this protein is cAMP-dependent protein kinase type 3 (TPK3).